The chain runs to 118 residues: Thioredoxin H3 (118 aa).

The residue at position 2 (Ala2) is an N-acetylalanine. Positions 2-113 constitute a Thioredoxin domain; that stretch reads AAEGEVIACH…IIANLEKHKT (112 aa). Residues Cys39 and Cys42 each act as nucleophile in the active site. The cysteines at positions 39 and 42 are disulfide-linked.

Belongs to the thioredoxin family. Plant H-type subfamily. As to quaternary structure, interacts with FBA5 and FBA8. Interacts with FBA6. Interacts with MDH1.

It localises to the cytoplasm. In terms of biological role, thiol-disulfide oxidoreductase that possesses disulfide reductase and insulin disulfide bonds reducing activities. Heat shock causes oligomerization and formation of high molecular weight (HMW) complexes with concomitant functional switching from a disulfide reductase to chaperone. The polypeptide is Thioredoxin H3 (TRX3) (Arabidopsis thaliana (Mouse-ear cress)).